A 730-amino-acid polypeptide reads, in one-letter code: Heterogeneous nuclear ribonucleoprotein M (730 aa).

The span at 1–13 (MAAGVEAAAEVAA) shows a compositional bias: low complexity. The disordered stretch occupies residues 1 to 62 (MAAGVEAAAE…NIKRGGNRFE (62 aa)). Residue Ala2 is modified to N-acetylalanine. A Glycyl lysine isopeptide (Lys-Gly) (interchain with G-Cter in SUMO2) cross-link involves residue Lys17. Ser29 carries the phosphoserine modification. Residue Lys37 forms a Glycyl lysine isopeptide (Lys-Gly) (interchain with G-Cter in SUMO2) linkage. Residues 38 to 50 (GEGERPAQNEKRK) show a composition bias toward basic and acidic residues. Glycyl lysine isopeptide (Lys-Gly) (interchain with G-Cter in SUMO2) cross-links involve residues Lys69 and Lys83. 2 RRM domains span residues 71 to 149 (YRAF…EDPD) and 204 to 281 (STVF…MDER). Residue Ser86 is modified to Phosphoserine. Residues Lys88 and Lys127 each participate in a glycyl lysine isopeptide (Lys-Gly) (interchain with G-Cter in SUMO2) cross-link. Lys134 bears the N6-acetyllysine; alternate mark. Residue Lys134 forms a Glycyl lysine isopeptide (Lys-Gly) (interchain with G-Cter in SUMO2); alternate linkage. Glycyl lysine isopeptide (Lys-Gly) (interchain with G-Cter in SUMO2) cross-links involve residues Lys143 and Lys145. Ser204 carries the phosphoserine modification. Residue Lys221 forms a Glycyl lysine isopeptide (Lys-Gly) (interchain with G-Cter in SUMO2) linkage. Lys277 carries the post-translational modification N6-acetyllysine; alternate. Lys277 participates in a covalent cross-link: Glycyl lysine isopeptide (Lys-Gly) (interchain with G-Cter in SUMO2); alternate. Residues Lys285 and Lys345 each participate in a glycyl lysine isopeptide (Lys-Gly) (interchain with G-Cter in SUMO2) cross-link. A phosphoserine mark is found at Ser365 and Ser377. Residues Lys381 and Lys388 each participate in a glycyl lysine isopeptide (Lys-Gly) (interchain with G-Cter in SUMO2) cross-link. Ser397 is modified (phosphoserine). 4 tandem repeats follow at residues 400 to 405 (GIERMG), 407 to 412 (GIDRLG), 415 to 420 (GMERMG), and 426 to 431 (GMDRVG). Residues 400–608 (GIERMGPGID…ALGAGIERMG (209 aa)) are 27 X 6 AA repeats of [GEVSTPAN]-[ILMV]-[DE]-[RH]-[MLVI]-[GAV]. Ser432 carries the post-translational modification Phosphoserine. 3 consecutive repeat copies span residues 433–438 (EIERMG), 440–445 (VMDRMG), and 446–451 (SVERMG). Phosphoserine is present on Ser452. 4 tandem repeats follow at residues 453 to 458 (GIERMG), 461 to 466 (GLDHMA), 468 to 473 (SIERMG), and 475 to 480 (TMERIG). Residue Ser468 is modified to Phosphoserine. Ser481 bears the Phosphoserine mark. 16 consecutive repeat copies span residues 482–487 (GVERMG), 493–498 (GLERMA), 500–505 (PIDRVG), 507–512 (TIERMG), 514–519 (GVERMG), 521–526 (AIERMG), 528–533 (SMERMV), 540–545 (GLERMG), 547–552 (VMDRMA), 554–559 (GLERMG), 562–566 (NLERM), 567–572 (GLERMG), 575–579 (SLERM), 580–585 (GLERMG), 588–593 (SLERMG), and 603–608 (GIERMG). Arg496 is modified (omega-N-methylarginine). Residue Ser528 is modified to Phosphoserine. A Phosphoserine modification is found at Ser575. Phosphoserine is present on Ser588. A phosphoserine mark is found at Ser618, Ser633, and Ser637. Lys651 participates in a covalent cross-link: Glycyl lysine isopeptide (Lys-Gly) (interchain with G-Cter in SUMO2). One can recognise an RRM 3 domain in the interval 653–729 (CQIFVRNLPF…REIDVRIDRN (77 aa)). Position 665 is a phosphothreonine (Thr665). Residue Lys667 forms a Glycyl lysine isopeptide (Lys-Gly) (interchain with G-Cter in SUMO2) linkage. Lys672 is modified (N6-acetyllysine). Residues Lys685 and Lys692 each participate in a glycyl lysine isopeptide (Lys-Gly) (interchain with G-Cter in SUMO2) cross-link. Position 698 is an N6-acetyllysine; alternate (Lys698). Lys698 is covalently cross-linked (Glycyl lysine isopeptide (Lys-Gly) (interchain with G-Cter in SUMO2); alternate). Lys698 is covalently cross-linked (Glycyl lysine isopeptide (Lys-Gly) (interchain with G-Cter in SUMO1); alternate). Ser701 carries the phosphoserine modification. Lys716 participates in a covalent cross-link: Glycyl lysine isopeptide (Lys-Gly) (interchain with G-Cter in SUMO2).

In terms of assembly, identified in the spliceosome C complex. Interacts with PPIA/CYPA. Sumoylated.

It is found in the nucleus. Its subcellular location is the nucleolus. In terms of biological role, pre-mRNA binding protein in vivo, binds avidly to poly(G) and poly(U) RNA homopolymers in vitro. Involved in splicing. Acts as a receptor for carcinoembryonic antigen in Kupffer cells, may initiate a series of signaling events leading to tyrosine phosphorylation of proteins and induction of IL-1 alpha, IL-6, IL-10 and tumor necrosis factor alpha cytokines. This chain is Heterogeneous nuclear ribonucleoprotein M (HNRNPM), found in Homo sapiens (Human).